Reading from the N-terminus, the 303-residue chain is Quinolinate synthase (303 aa).

H24 and S41 together coordinate iminosuccinate. C86 is a [4Fe-4S] cluster binding site. Residues Y112–N114 and S129 contribute to the iminosuccinate site. Position 172 (C172) interacts with [4Fe-4S] cluster. Residues H198–E200 and T215 each bind iminosuccinate. Residue C260 coordinates [4Fe-4S] cluster.

This sequence belongs to the quinolinate synthase family. Type 2 subfamily. [4Fe-4S] cluster serves as cofactor.

It is found in the cytoplasm. The catalysed reaction is iminosuccinate + dihydroxyacetone phosphate = quinolinate + phosphate + 2 H2O + H(+). It participates in cofactor biosynthesis; NAD(+) biosynthesis; quinolinate from iminoaspartate: step 1/1. In terms of biological role, catalyzes the condensation of iminoaspartate with dihydroxyacetone phosphate to form quinolinate. This is Quinolinate synthase from Clostridium kluyveri (strain NBRC 12016).